We begin with the raw amino-acid sequence, 291 residues long: Acetyl-coenzyme A carboxylase carboxyl transferase subunit beta (291 aa).

Positions 1 to 23 (MSWLSKLMPSGIRTDNTPSKKRS) are disordered. A CoA carboxyltransferase N-terminal domain is found at 28 to 291 (LWEKCSNCGS…LGRQPAPEVA (264 aa)). Residues Cys32, Cys35, Cys51, and Cys54 each contribute to the Zn(2+) site. The C4-type zinc-finger motif lies at 32 to 54 (CSNCGSALYRPELEENLEVCPKC).

The protein belongs to the AccD/PCCB family. In terms of assembly, acetyl-CoA carboxylase is a heterohexamer composed of biotin carboxyl carrier protein (AccB), biotin carboxylase (AccC) and two subunits each of ACCase subunit alpha (AccA) and ACCase subunit beta (AccD). It depends on Zn(2+) as a cofactor.

The protein localises to the cytoplasm. It carries out the reaction N(6)-carboxybiotinyl-L-lysyl-[protein] + acetyl-CoA = N(6)-biotinyl-L-lysyl-[protein] + malonyl-CoA. The protein operates within lipid metabolism; malonyl-CoA biosynthesis; malonyl-CoA from acetyl-CoA: step 1/1. In terms of biological role, component of the acetyl coenzyme A carboxylase (ACC) complex. Biotin carboxylase (BC) catalyzes the carboxylation of biotin on its carrier protein (BCCP) and then the CO(2) group is transferred by the transcarboxylase to acetyl-CoA to form malonyl-CoA. The chain is Acetyl-coenzyme A carboxylase carboxyl transferase subunit beta from Stenotrophomonas maltophilia (strain R551-3).